The sequence spans 487 residues: Protein nucleotidyltransferase YdiU (487 aa).

Residues Gly-92, Arg-95, Lys-106, Asp-118, Gly-119, Arg-169, and Arg-176 each contribute to the ATP site. The active-site Proton acceptor is the Asp-253. Asn-254 and Asp-263 together coordinate Mg(2+). Asp-263 serves as a coordination point for ATP.

The protein belongs to the SELO family. Requires Mg(2+) as cofactor. Mn(2+) is required as a cofactor.

It carries out the reaction L-seryl-[protein] + ATP = 3-O-(5'-adenylyl)-L-seryl-[protein] + diphosphate. The enzyme catalyses L-threonyl-[protein] + ATP = 3-O-(5'-adenylyl)-L-threonyl-[protein] + diphosphate. It catalyses the reaction L-tyrosyl-[protein] + ATP = O-(5'-adenylyl)-L-tyrosyl-[protein] + diphosphate. The catalysed reaction is L-histidyl-[protein] + UTP = N(tele)-(5'-uridylyl)-L-histidyl-[protein] + diphosphate. It carries out the reaction L-seryl-[protein] + UTP = O-(5'-uridylyl)-L-seryl-[protein] + diphosphate. The enzyme catalyses L-tyrosyl-[protein] + UTP = O-(5'-uridylyl)-L-tyrosyl-[protein] + diphosphate. Its function is as follows. Nucleotidyltransferase involved in the post-translational modification of proteins. It can catalyze the addition of adenosine monophosphate (AMP) or uridine monophosphate (UMP) to a protein, resulting in modifications known as AMPylation and UMPylation. The protein is Protein nucleotidyltransferase YdiU of Bordetella pertussis (strain Tohama I / ATCC BAA-589 / NCTC 13251).